Reading from the N-terminus, the 249-residue chain is 2,3-bisphosphoglycerate-dependent phosphoglycerate mutase (249 aa).

Substrate-binding positions include 8 to 15 (RHGESTWN), 21 to 22 (TG), arginine 60, 87 to 90 (ERHY), lysine 98, 114 to 115 (RR), and 183 to 184 (GN). Histidine 9 serves as the catalytic Tele-phosphohistidine intermediate. Residue glutamate 87 is the Proton donor/acceptor of the active site.

This sequence belongs to the phosphoglycerate mutase family. BPG-dependent PGAM subfamily. As to quaternary structure, homodimer.

It catalyses the reaction (2R)-2-phosphoglycerate = (2R)-3-phosphoglycerate. The protein operates within carbohydrate degradation; glycolysis; pyruvate from D-glyceraldehyde 3-phosphate: step 3/5. Functionally, catalyzes the interconversion of 2-phosphoglycerate and 3-phosphoglycerate. The sequence is that of 2,3-bisphosphoglycerate-dependent phosphoglycerate mutase from Azoarcus sp. (strain BH72).